We begin with the raw amino-acid sequence, 557 residues long: Dihydroxy-acid dehydratase (557 aa).

Residue Asp78 coordinates Mg(2+). Cys119 lines the [2Fe-2S] cluster pocket. Mg(2+) is bound by residues Asp120 and Lys121. The residue at position 121 (Lys121) is an N6-carboxylysine. Position 192 (Cys192) interacts with [2Fe-2S] cluster. Glu442 is a binding site for Mg(2+). The Proton acceptor role is filled by Ser468.

This sequence belongs to the IlvD/Edd family. Homodimer. It depends on [2Fe-2S] cluster as a cofactor. The cofactor is Mg(2+).

The enzyme catalyses (2R)-2,3-dihydroxy-3-methylbutanoate = 3-methyl-2-oxobutanoate + H2O. It carries out the reaction (2R,3R)-2,3-dihydroxy-3-methylpentanoate = (S)-3-methyl-2-oxopentanoate + H2O. It functions in the pathway amino-acid biosynthesis; L-isoleucine biosynthesis; L-isoleucine from 2-oxobutanoate: step 3/4. The protein operates within amino-acid biosynthesis; L-valine biosynthesis; L-valine from pyruvate: step 3/4. In terms of biological role, functions in the biosynthesis of branched-chain amino acids. Catalyzes the dehydration of (2R,3R)-2,3-dihydroxy-3-methylpentanoate (2,3-dihydroxy-3-methylvalerate) into 2-oxo-3-methylpentanoate (2-oxo-3-methylvalerate) and of (2R)-2,3-dihydroxy-3-methylbutanoate (2,3-dihydroxyisovalerate) into 2-oxo-3-methylbutanoate (2-oxoisovalerate), the penultimate precursor to L-isoleucine and L-valine, respectively. The chain is Dihydroxy-acid dehydratase from Bacillus cereus (strain AH820).